The sequence spans 430 residues: 3-phosphoshikimate 1-carboxyvinyltransferase (430 aa).

3 residues coordinate 3-phosphoshikimate: K21, S22, and R26. Residue K21 coordinates phosphoenolpyruvate. Phosphoenolpyruvate-binding residues include G94 and R122. 3-phosphoshikimate is bound by residues S167, Q169, D317, and K344. Position 169 (Q169) interacts with phosphoenolpyruvate. The Proton acceptor role is filled by D317. The phosphoenolpyruvate site is built by R348 and R390.

It belongs to the EPSP synthase family. Monomer.

The protein localises to the cytoplasm. It carries out the reaction 3-phosphoshikimate + phosphoenolpyruvate = 5-O-(1-carboxyvinyl)-3-phosphoshikimate + phosphate. It functions in the pathway metabolic intermediate biosynthesis; chorismate biosynthesis; chorismate from D-erythrose 4-phosphate and phosphoenolpyruvate: step 6/7. In terms of biological role, catalyzes the transfer of the enolpyruvyl moiety of phosphoenolpyruvate (PEP) to the 5-hydroxyl of shikimate-3-phosphate (S3P) to produce enolpyruvyl shikimate-3-phosphate and inorganic phosphate. The polypeptide is 3-phosphoshikimate 1-carboxyvinyltransferase (Thermodesulfovibrio yellowstonii (strain ATCC 51303 / DSM 11347 / YP87)).